Consider the following 154-residue polypeptide: Toxin YhaV (154 aa).

In terms of assembly, homohexamer; forms a complex with PrlF (SohA) with stoichiometry PrlF(2)-YhaV(4), possibly as a YhaV(2)-PrlF(2)-YhaV(2) complex like the MazFE complex. May dimerize in solution.

In terms of biological role, toxic component of a type II toxin-antitoxin (TA) system. Has RNase activity in vitro. Acts as a transcription factor. The YhaV/PrlF complex binds the prlF-yhaV operon, probably negatively regulating its expression. This Escherichia coli O157:H7 protein is Toxin YhaV (yhaV).